Consider the following 383-residue polypeptide: Neuropeptide Y receptor type 1 (383 aa).

Residues 1 to 44 are Extracellular-facing; it reads MNSTLSSQVENHSIYYNFSEKNSQFLAFENDDCHLPLAMIFTLA. N-linked (GlcNAc...) asparagine glycans are attached at residues Asn2, Asn11, and Asn17. The chain crosses the membrane as a helical span at residues 45-65; it reads LAYGAVIILGVSGNLALIIII. The Cytoplasmic segment spans residues 66–76; that stretch reads LKQKEMRNVTN. Residues 77-97 traverse the membrane as a helical segment; sequence ILIVNLSFSDLLVAIMCLPFT. Topologically, residues 98–116 are extracellular; the sequence is FVYTLMDHWVFGEVMCKLN. A disulfide bridge connects residues Cys113 and Cys198. A helical transmembrane segment spans residues 117-137; the sequence is PFVQCVSITVSIFSLVLIAVE. Over 138-154 the chain is Cytoplasmic; it reads RHQLIINPRGWRPSNRH. The helical transmembrane segment at 155–175 threads the bilayer; that stretch reads AYVGIAVIWVLAVASSLPFLI. The Extracellular portion of the chain corresponds to 176-211; the sequence is YQVLTDEPFQNVTLDAFKDKYVCFDKFLSDSHRLSY. Residues 212–232 traverse the membrane as a helical segment; sequence TTLLLVLQYFGPLCFIFICYF. The Cytoplasmic segment spans residues 233 to 260; that stretch reads KIYIRLKRRNNMMDKMRDNKYRSSETKR. A helical transmembrane segment spans residues 261 to 281; it reads INVMLLSIVVAFAVCWLPLTI. Residues 282-299 lie on the Extracellular side of the membrane; it reads FNTVFDWNHQIIATCNHN. Residues 300 to 320 form a helical membrane-spanning segment; that stretch reads LLFLLCHLTAMISTCINPIFY. The Cytoplasmic segment spans residues 321-383; that stretch reads GFLNKNFQRD…KIHSDDNEKI (63 aa). Cys338 carries the S-palmitoyl cysteine lipid modification. The residue at position 368 (Ser368) is a Phosphoserine.

Belongs to the G-protein coupled receptor 1 family.

The protein resides in the cell membrane. Functionally, receptor for neuropeptide Y and peptide YY. This is Neuropeptide Y receptor type 1 (NPY1R) from Sus scrofa (Pig).